The chain runs to 449 residues: Dynein axonemal assembly factor 3 (449 aa).

Belongs to the DNAAF3 family.

Its subcellular location is the cytoplasm. It localises to the dynein axonemal particle. Functionally, required for the assembly of axonemal inner and outer dynein arms. Involved in preassembly of dyneins into complexes before their transport into cilia. The protein is Dynein axonemal assembly factor 3 (dnaaf3) of Xenopus tropicalis (Western clawed frog).